Reading from the N-terminus, the 1962-residue chain is Myosin heavy chain, muscle (1962 aa).

The region spanning 33 to 82 is the Myosin N-terminal SH3-like domain; it reads DSKKSCWIPDEKEGYLLGEIKATKGDIVSVGLQGGEVRDIKSEKVEKVNP. Residues 86 to 777 form the Myosin motor domain; sequence EKIEDMADMT…VLGQMEEFRD (692 aa). 179 to 186 is an ATP binding site; that stretch reads GESGAGKT. Residues 656–678 form an actin-binding region; the sequence is LNSLMTTLRSTQPHFVRCIIPNE. The 30-residue stretch at 780–809 folds into the IQ domain; that stretch reads LGKIMSWMQAWARGYLSRKGFKKLQEQRVA. Residues 802-1927 adopt a coiled-coil conformation; the sequence is KLQEQRVALK…KFRAKGRAGS (1126 aa). Disordered stretches follow at residues 1822 to 1862 and 1922 to 1962; these read ENEL…NHER and KGRA…ENEF.

This sequence belongs to the TRAFAC class myosin-kinesin ATPase superfamily. Myosin family. Muscle myosin is a hexameric protein that consists of 2 heavy chain subunits (MHC), 2 alkali light chain subunits (MLC) and 2 regulatory light chain subunits (MLC-2). In terms of tissue distribution, expressed in larval and adult muscles. Isoforms containing exon 9a are expressed in indirect flight muscles, exons 9a and 9b are expressed in jump muscles, exons 9b and 9c are expressed in other larval and adult muscles.

Its subcellular location is the cytoplasm. The protein localises to the myofibril. Its function is as follows. Muscle contraction. The chain is Myosin heavy chain, muscle (Mhc) from Drosophila melanogaster (Fruit fly).